The chain runs to 173 residues: Crossover junction endodeoxyribonuclease RuvC (173 aa).

Active-site residues include Asp-8, Glu-67, and Asp-139. Residues Asp-8, Glu-67, and Asp-139 each coordinate Mg(2+).

It belongs to the RuvC family. As to quaternary structure, homodimer which binds Holliday junction (HJ) DNA. The HJ becomes 2-fold symmetrical on binding to RuvC with unstacked arms; it has a different conformation from HJ DNA in complex with RuvA. In the full resolvosome a probable DNA-RuvA(4)-RuvB(12)-RuvC(2) complex forms which resolves the HJ. Requires Mg(2+) as cofactor.

It localises to the cytoplasm. The catalysed reaction is Endonucleolytic cleavage at a junction such as a reciprocal single-stranded crossover between two homologous DNA duplexes (Holliday junction).. The RuvA-RuvB-RuvC complex processes Holliday junction (HJ) DNA during genetic recombination and DNA repair. Endonuclease that resolves HJ intermediates. Cleaves cruciform DNA by making single-stranded nicks across the HJ at symmetrical positions within the homologous arms, yielding a 5'-phosphate and a 3'-hydroxyl group; requires a central core of homology in the junction. The consensus cleavage sequence is 5'-(A/T)TT(C/G)-3'. Cleavage occurs on the 3'-side of the TT dinucleotide at the point of strand exchange. HJ branch migration catalyzed by RuvA-RuvB allows RuvC to scan DNA until it finds its consensus sequence, where it cleaves and resolves the cruciform DNA. The polypeptide is Crossover junction endodeoxyribonuclease RuvC (Salmonella arizonae (strain ATCC BAA-731 / CDC346-86 / RSK2980)).